The sequence spans 96 residues: CRISPR-associated endoribonuclease Cas2 1 (96 aa).

Asp8 is a binding site for Mg(2+).

This sequence belongs to the CRISPR-associated endoribonuclease Cas2 protein family. Homodimer, forms a heterotetramer with a Cas1 homodimer. Requires Mg(2+) as cofactor.

Functionally, CRISPR (clustered regularly interspaced short palindromic repeat), is an adaptive immune system that provides protection against mobile genetic elements (viruses, transposable elements and conjugative plasmids). CRISPR clusters contain sequences complementary to antecedent mobile elements and target invading nucleic acids. CRISPR clusters are transcribed and processed into CRISPR RNA (crRNA). Functions as a ssRNA-specific endoribonuclease. Involved in the integration of spacer DNA into the CRISPR cassette. In Moorella thermoacetica (strain ATCC 39073 / JCM 9320), this protein is CRISPR-associated endoribonuclease Cas2 1.